The following is a 197-amino-acid chain: Pyridoxal 5'-phosphate synthase subunit PdxT (197 aa).

54-56 (GES) is an L-glutamine binding site. The active-site Nucleophile is the C86. L-glutamine contacts are provided by residues R113 and 141 to 142 (IR). Residues H177 and E179 each act as charge relay system in the active site.

The protein belongs to the glutaminase PdxT/SNO family. As to quaternary structure, in the presence of PdxS, forms a dodecamer of heterodimers. Only shows activity in the heterodimer.

It catalyses the reaction aldehydo-D-ribose 5-phosphate + D-glyceraldehyde 3-phosphate + L-glutamine = pyridoxal 5'-phosphate + L-glutamate + phosphate + 3 H2O + H(+). It carries out the reaction L-glutamine + H2O = L-glutamate + NH4(+). It functions in the pathway cofactor biosynthesis; pyridoxal 5'-phosphate biosynthesis. Catalyzes the hydrolysis of glutamine to glutamate and ammonia as part of the biosynthesis of pyridoxal 5'-phosphate. The resulting ammonia molecule is channeled to the active site of PdxS. This chain is Pyridoxal 5'-phosphate synthase subunit PdxT, found in Haloarcula marismortui (strain ATCC 43049 / DSM 3752 / JCM 8966 / VKM B-1809) (Halobacterium marismortui).